A 240-amino-acid chain; its full sequence is Ubiquinone biosynthesis O-methyltransferase (240 aa).

Positions 44, 64, 85, and 129 each coordinate S-adenosyl-L-methionine.

The protein belongs to the methyltransferase superfamily. UbiG/COQ3 family.

The catalysed reaction is a 3-demethylubiquinol + S-adenosyl-L-methionine = a ubiquinol + S-adenosyl-L-homocysteine + H(+). It catalyses the reaction a 3-(all-trans-polyprenyl)benzene-1,2-diol + S-adenosyl-L-methionine = a 2-methoxy-6-(all-trans-polyprenyl)phenol + S-adenosyl-L-homocysteine + H(+). It functions in the pathway cofactor biosynthesis; ubiquinone biosynthesis. Functionally, O-methyltransferase that catalyzes the 2 O-methylation steps in the ubiquinone biosynthetic pathway. In Escherichia coli O8 (strain IAI1), this protein is Ubiquinone biosynthesis O-methyltransferase.